The chain runs to 262 residues: Protein crossbronx-like (262 aa).

The UBC core domain occupies 15–179 (RQGYQVLAEY…VQELALFTKK (165 aa)).

Belongs to the ubiquitin-conjugating enzyme family. FTS subfamily.

This chain is Protein crossbronx-like, found in Drosophila pseudoobscura pseudoobscura (Fruit fly).